A 613-amino-acid polypeptide reads, in one-letter code: 4-hydroxy-3-methylbut-2-en-1-yl diphosphate synthase (flavodoxin) (613 aa).

4 residues coordinate [4Fe-4S] cluster: cysteine 521, cysteine 524, cysteine 555, and glutamate 562.

Belongs to the IspG family. It depends on [4Fe-4S] cluster as a cofactor.

It carries out the reaction (2E)-4-hydroxy-3-methylbut-2-enyl diphosphate + oxidized [flavodoxin] + H2O + 2 H(+) = 2-C-methyl-D-erythritol 2,4-cyclic diphosphate + reduced [flavodoxin]. It functions in the pathway isoprenoid biosynthesis; isopentenyl diphosphate biosynthesis via DXP pathway; isopentenyl diphosphate from 1-deoxy-D-xylulose 5-phosphate: step 5/6. Functionally, converts 2C-methyl-D-erythritol 2,4-cyclodiphosphate (ME-2,4cPP) into 1-hydroxy-2-methyl-2-(E)-butenyl 4-diphosphate. This is 4-hydroxy-3-methylbut-2-en-1-yl diphosphate synthase (flavodoxin) from Bacteroides thetaiotaomicron (strain ATCC 29148 / DSM 2079 / JCM 5827 / CCUG 10774 / NCTC 10582 / VPI-5482 / E50).